The chain runs to 135 residues: Galectin-1 (135 aa).

Ala2 carries the N-acetylalanine modification. The 132-residue stretch at 4 to 135 folds into the Galectin domain; it reads GLVASNLNLK…DFKIKCVAFE (132 aa). 2 positions are modified to N6-acetyllysine: Lys13 and Lys29. Ser30 is subject to Phosphoserine. A beta-D-galactoside contacts are provided by residues 45 to 49, His53, Asn62, and 69 to 72; these read HFNPR and WGAE. Lys108 carries the N6-acetyllysine; alternate modification. Lys108 is subject to N6-succinyllysine; alternate. At Lys128 the chain carries N6-acetyllysine.

In terms of assembly, homodimer. Binds LGALS3BP. Interacts with CD2, CD3, CD4, CD6, CD7, CD43, ALCAM and CD45. Interacts with laminin (via poly-N-acetyllactosamine). Interacts with SUSD2. Interacts with cargo receptor TMED10; the interaction mediates the translocation from the cytoplasm into the ERGIC (endoplasmic reticulum-Golgi intermediate compartment) and thereby secretion.

The protein localises to the secreted. The protein resides in the extracellular space. Its subcellular location is the extracellular matrix. It localises to the cytoplasm. In terms of biological role, lectin that binds beta-galactoside and a wide array of complex carbohydrates. Plays a role in regulating apoptosis, cell proliferation and cell differentiation. Inhibits CD45 protein phosphatase activity and therefore the dephosphorylation of Lyn kinase. Strong inducer of T-cell apoptosis. The sequence is that of Galectin-1 (LGALS1) from Bos taurus (Bovine).